We begin with the raw amino-acid sequence, 131 residues long: Small ribosomal subunit protein uS8 (131 aa).

This sequence belongs to the universal ribosomal protein uS8 family. As to quaternary structure, part of the 30S ribosomal subunit. Contacts proteins S5 and S12.

Its function is as follows. One of the primary rRNA binding proteins, it binds directly to 16S rRNA central domain where it helps coordinate assembly of the platform of the 30S subunit. The polypeptide is Small ribosomal subunit protein uS8 (Acinetobacter baylyi (strain ATCC 33305 / BD413 / ADP1)).